The following is a 389-amino-acid chain: Succinate--CoA ligase [ADP-forming] subunit beta (389 aa).

An ATP-grasp domain is found at 9 to 244 (KQLFADYGLP…ETQEDPREVE (236 aa)). ATP contacts are provided by residues Lys-46, 53–55 (GRG), Glu-99, Gly-102, and Glu-107. Positions 199 and 213 each coordinate Mg(2+). Substrate-binding positions include Asn-264 and 321–323 (GIV).

It belongs to the succinate/malate CoA ligase beta subunit family. Heterotetramer of two alpha and two beta subunits. Mg(2+) is required as a cofactor.

It carries out the reaction succinate + ATP + CoA = succinyl-CoA + ADP + phosphate. It catalyses the reaction GTP + succinate + CoA = succinyl-CoA + GDP + phosphate. The protein operates within carbohydrate metabolism; tricarboxylic acid cycle; succinate from succinyl-CoA (ligase route): step 1/1. Its function is as follows. Succinyl-CoA synthetase functions in the citric acid cycle (TCA), coupling the hydrolysis of succinyl-CoA to the synthesis of either ATP or GTP and thus represents the only step of substrate-level phosphorylation in the TCA. The beta subunit provides nucleotide specificity of the enzyme and binds the substrate succinate, while the binding sites for coenzyme A and phosphate are found in the alpha subunit. The chain is Succinate--CoA ligase [ADP-forming] subunit beta from Tolumonas auensis (strain DSM 9187 / NBRC 110442 / TA 4).